The sequence spans 371 residues: MTTLRRTPLAAVHESLGASFTDFAGWNMPVRYSSDLAEHHAVRKNAGIFDLSHMGEIRISGPDSGAALDYALAGKLSAVAEGRAKYSLLLTDEGGVVDDLVTYHLPDGDYLVVANAANAETDLAEFTKRCARFDVTVTDESAQTALVAVQGPTAVKIVLAALQKANTTLDSDEVRDVKYYRCLTGELDGFPVLVARTGYTGEDGYELYVPAKAAAHLWQLLMDAGGEDLTPCGLACRDTLRLEAGMPLYGHELGTDIHPSQAGLGRVVNFKKEGDFVGRCALENRDTTADRVLVGLTGEGRRAGRAGYAVVNEDKTVGAITSGILSPTLGHPIAMAFVDPDVAKIGTSLSVDVRGKALNTTVVELPFYKRS.

This sequence belongs to the GcvT family. In terms of assembly, the glycine cleavage system is composed of four proteins: P, T, L and H.

It carries out the reaction N(6)-[(R)-S(8)-aminomethyldihydrolipoyl]-L-lysyl-[protein] + (6S)-5,6,7,8-tetrahydrofolate = N(6)-[(R)-dihydrolipoyl]-L-lysyl-[protein] + (6R)-5,10-methylene-5,6,7,8-tetrahydrofolate + NH4(+). The glycine cleavage system catalyzes the degradation of glycine. The polypeptide is Aminomethyltransferase (Cutibacterium acnes (strain DSM 16379 / KPA171202) (Propionibacterium acnes)).